The chain runs to 649 residues: Lipolysis-stimulated lipoprotein receptor (649 aa).

Residues 1–16 show a composition bias toward gly residues; sequence MQQDGLGVGTRNGSGK. Positions 1-21 are disordered; sequence MQQDGLGVGTRNGSGKGRSVH. Over 1–259 the chain is Extracellular; it reads MQQDGLGVGT…PGFQAGPIED (259 aa). Positions 86–234 constitute an Ig-like V-type domain; that stretch reads PARAIQVTVS…DLQGNNEAYA (149 aa). Cys111 and Cys218 form a disulfide bridge. Residues 260–280 traverse the membrane as a helical segment; the sequence is WLFVVVVCLAAFLIFLLLGIC. Residues 281-649 lie on the Cytoplasmic side of the membrane; that stretch reads WCQCCPHTCC…LALSRESLVV (369 aa). Residue Thr336 is modified to Phosphothreonine. A phosphoserine mark is found at Ser365, Ser371, Ser389, Ser432, and Ser436. Positions 414-649 are disordered; it reads NFDPSRPGPP…LALSRESLVV (236 aa). The span at 426–444 shows a compositional bias: basic and acidic residues; the sequence is RVERAMSEVTSLHEDDWRS. Thr453 bears the Phosphothreonine mark. Phosphoserine occurs at positions 464, 467, and 493. Thr501 bears the Phosphothreonine mark. Residues 502-518 show a composition bias toward polar residues; sequence PPSTAESGSRSPTSNGG. Phosphoserine occurs at positions 528 and 530. Basic and acidic residues predominate over residues 529–565; sequence RSRDDLYDQDDSRDFPRSRDPHYDDFRSRERPPADPR. Phosphotyrosine is present on Tyr535. Phosphoserine occurs at positions 540 and 579. Positions 589 to 609 are enriched in basic and acidic residues; sequence RLLEEAVRKKGSEERRRPHKE. At Ser631 the chain carries Phosphoserine. Lys638 participates in a covalent cross-link: Glycyl lysine isopeptide (Lys-Gly) (interchain with G-Cter in ubiquitin). Residues Ser643 and Ser646 each carry the phosphoserine modification.

This sequence belongs to the immunoglobulin superfamily. LISCH7 family. As to quaternary structure, homotrimer or homotetramer. Assembles into cell-cell contacts. Interacts (via the cytoplasmic domain) with MARVELD2 (via C-terminal cytoplasmic domain); the interaction is required to recruit MARVELD2 to tricellular contacts. Interacts with OCLN. Post-translationally, phosphorylation at Ser-365 by MAPK8/JNK1 and MAPK9/JNK2 may be required for exclusive localization at tricellular tight junstions. In terms of processing, polyubiquitinated at Lys-638 via 'Lys-63'-linked ubiquitin chains; deubiquitinated by USP53.

It localises to the cell membrane. It is found in the cell junction. The protein localises to the tight junction. In terms of biological role, probable role in the clearance of triglyceride-rich lipoprotein from blood. Binds chylomicrons, LDL and VLDL in presence of free fatty acids and allows their subsequent uptake in the cells. Maintains epithelial barrier function by recruiting MARVELD2/tricellulin to tricellular tight junctions. This Homo sapiens (Human) protein is Lipolysis-stimulated lipoprotein receptor.